Here is a 432-residue protein sequence, read N- to C-terminus: Adenylosuccinate synthetase (432 aa).

Residues 13–19 (GDEGKGK) and 41–43 (GHT) each bind GTP. Aspartate 14 functions as the Proton acceptor in the catalytic mechanism. Residues aspartate 14 and glycine 41 each contribute to the Mg(2+) site. Residues 14–17 (DEGK), 39–42 (NAGH), threonine 130, arginine 144, glutamine 225, threonine 240, and arginine 304 contribute to the IMP site. Residue histidine 42 is the Proton donor of the active site. A substrate-binding site is contributed by 300–306 (ATTGRRR). Residues arginine 306, 332 to 334 (KLD), and 415 to 417 (STG) each bind GTP.

This sequence belongs to the adenylosuccinate synthetase family. As to quaternary structure, homodimer. The cofactor is Mg(2+).

The protein localises to the cytoplasm. It carries out the reaction IMP + L-aspartate + GTP = N(6)-(1,2-dicarboxyethyl)-AMP + GDP + phosphate + 2 H(+). Its pathway is purine metabolism; AMP biosynthesis via de novo pathway; AMP from IMP: step 1/2. In terms of biological role, plays an important role in the de novo pathway of purine nucleotide biosynthesis. Catalyzes the first committed step in the biosynthesis of AMP from IMP. The sequence is that of Adenylosuccinate synthetase from Salmonella heidelberg (strain SL476).